The sequence spans 853 residues: MCCEKWSRVAEMFLFIEEREDCKILCLCSRAFVEDRKLYNLGLKGYYIRDSGNNSGDQATEEEEGGYSCGTAESHDSKGIGLDESELDSEAELMRSMGLPLQFGRITAHKDFEVSMNTRNKVKIKKKKHQKKYLDEIVQESWRKEYEEDDILASDDPSSIEQYENTRTYELQSKKDTETENPPVENTLSPKLEITEKWEKYWNEYGGGLLWQSWQEKHPGQALSSEPWNFPDTKEEWEQHYSQLYWYYLEQFQYWEAQGWTFDASQSCDTDTYTSKTEADDKNDEKCMKVDLVSFPSSPIMVDNDSSGTSDKDHSEILDGISNIKLNSEEVTQSQLDSCTSHDGHQQLSEVSSKRECPASGQSEPRNGGTNEESNSSGNTNTDPPAEDSQKSSGANTSKDRPHASGTDGDESEEDPPEHKPSKLKRSHELDIDENPASDFDDSGSLLGFKYGSGQKYGGIPNFSHRQVRYLEKNVKLKSKYLDMRRQIKMKNKHIFFTKESEKPFFKKSKILSKVEKFLTWVNKPMDEEASQESSSHDNVHDASTSSDSEEQDMSVKKGDDLLETNNPEPEKCQSVSSAGELETENYERDSLLATVPDEQDCVTQEVPDSRQAETEAEVKKKKNKKKNKKVNGLPPEIAAVPELAKYWAQRYRLFSRFDDGIKLDREGWFSVTPEKIAEHIAGRVSQSFKCDVVVDAFCGVGGNTIQFALTGMRVIAIDIDPVKIALARNNAEVYGIADKIEFICGDFLLLASFLKADVVFLSPPWGGPDYATAETFDIRTMMSPDGFEIFRLSKKITNNIVYFLPRNADIDQVASLAGPGGQVEIEQNFLNNKLKTITAYFGDLIRRPASET.

Positions 53 to 80 are disordered; sequence NNSGDQATEEEEGGYSCGTAESHDSKGI. Ser-55 carries the post-translational modification Phosphoserine. Thr-60 is subject to Phosphothreonine. Phosphoserine is present on residues Ser-85, Ser-89, Ser-96, and Ser-141. Tyr-146 carries the post-translational modification Phosphotyrosine. The segment at 149–187 is disordered; that stretch reads DDILASDDPSSIEQYENTRTYELQSKKDTETENPPVENT. Ser-154 is subject to Phosphoserine. Residues 156–171 are compositionally biased toward polar residues; it reads DPSSIEQYENTRTYEL. The residue at position 189 (Ser-189) is a Phosphoserine. Disordered regions lie at residues 334–461 and 527–632; these read SQLD…GGIP and DEEA…KKVN. The span at 367–382 shows a compositional bias: low complexity; the sequence is NGGTNEESNSSGNTNT. 3 positions are modified to phosphoserine: Ser-412, Ser-438, and Ser-578. The segment covering 431 to 442 has biased composition (acidic residues); the sequence is DIDENPASDFDD. Over residues 564–578 the composition is skewed to polar residues; it reads ETNNPEPEKCQSVSS. Over residues 608–619 the composition is skewed to basic and acidic residues; the sequence is PDSRQAETEAEV. Positions 620–630 are enriched in basic residues; it reads KKKKNKKKNKK. The segment at 631 to 846 is sufficient for catalytic activity; that stretch reads VNGLPPEIAA…TITAYFGDLI (216 aa). Residue Asp-719 coordinates S-adenosyl-L-methionine. Trp-766 serves as a coordination point for N(7)-methylguanosine.

The protein belongs to the methyltransferase superfamily. Trimethylguanosine synthase family. As to quaternary structure, may form homooligomers. Interacts with CREBBP/CBP, EED/WAIT1, EP300/P300, NCOA6/PRIP, PPARBP/PBP and SMN. Ubiquitously expressed. High expression in heart, skeletal muscle, kidney, liver and placenta.

The protein localises to the cytoplasm. It localises to the nucleus. The protein resides in the cajal body. Its subcellular location is the nucleolus. The enzyme catalyses a 5'-end (N(7)-methyl 5'-triphosphoguanosine)-ribonucleoside in snRNA + S-adenosyl-L-methionine = a 5'-end (N(2),N(7)-dimethyl 5'-triphosphoguanosine)-ribonucleoside in snRNA + S-adenosyl-L-homocysteine + H(+). It catalyses the reaction a 5'-end (N(7)-methyl 5'-triphosphoguanosine)-ribonucleoside in snoRNA + S-adenosyl-L-methionine = a 5'-end (N(2),N(7)-dimethyl 5'-triphosphoguanosine)-ribonucleoside in snoRNA + S-adenosyl-L-homocysteine + H(+). It carries out the reaction a 5'-end (N(2),N(7)-dimethyl 5'-triphosphoguanosine)-ribonucleoside in snRNA + S-adenosyl-L-methionine = a 5'-end (N(2),N(2),N(7)-trimethyl 5'-triphosphoguanosine)-ribonucleoside in snRNA + S-adenosyl-L-homocysteine + H(+). The catalysed reaction is a 5'-end (N(2),N(7)-dimethyl 5'-triphosphoguanosine)-ribonucleoside in snoRNA + S-adenosyl-L-methionine = a 5'-end (N(2),N(2),N(7)-trimethyl 5'-triphosphoguanosine)-ribonucleoside in snoRNA + S-adenosyl-L-homocysteine + H(+). In terms of biological role, catalyzes the 2 serial methylation steps for the conversion of the 7-monomethylguanosine (m(7)G) caps of snRNAs and snoRNAs to a 2,2,7-trimethylguanosine (m(2,2,7)G) cap structure. The enzyme is specific for guanine, and N7 methylation must precede N2 methylation. Hypermethylation of the m7G cap of U snRNAs leads to their concentration in nuclear foci, their colocalization with coilin and the formation of canonical Cajal bodies (CBs). Plays a role in transcriptional regulation. This chain is Trimethylguanosine synthase (TGS1), found in Homo sapiens (Human).